The chain runs to 394 residues: Phosphoglycerate kinase (394 aa).

Substrate contacts are provided by residues 21–23, Arg-36, 59–62, Arg-118, and Arg-151; these read DFN and HLGR. ATP-binding positions include Lys-202, Gly-293, Glu-324, and 350–353; that span reads GGDS.

It belongs to the phosphoglycerate kinase family. As to quaternary structure, monomer.

It is found in the cytoplasm. It catalyses the reaction (2R)-3-phosphoglycerate + ATP = (2R)-3-phospho-glyceroyl phosphate + ADP. The protein operates within carbohydrate degradation; glycolysis; pyruvate from D-glyceraldehyde 3-phosphate: step 2/5. The sequence is that of Phosphoglycerate kinase from Exiguobacterium sp. (strain ATCC BAA-1283 / AT1b).